The sequence spans 267 residues: 4-hydroxy-tetrahydrodipicolinate reductase (267 aa).

Residue 11-16 (GAAGRM) coordinates NAD(+). NADP(+) is bound at residue R39. NAD(+) contacts are provided by residues 100–102 (GTT) and 126–129 (APNF). The active-site Proton donor/acceptor is H156. H157 is a binding site for (S)-2,3,4,5-tetrahydrodipicolinate. K160 (proton donor) is an active-site residue. 166–167 (GT) is a binding site for (S)-2,3,4,5-tetrahydrodipicolinate.

This sequence belongs to the DapB family.

The protein resides in the cytoplasm. The catalysed reaction is (S)-2,3,4,5-tetrahydrodipicolinate + NAD(+) + H2O = (2S,4S)-4-hydroxy-2,3,4,5-tetrahydrodipicolinate + NADH + H(+). It catalyses the reaction (S)-2,3,4,5-tetrahydrodipicolinate + NADP(+) + H2O = (2S,4S)-4-hydroxy-2,3,4,5-tetrahydrodipicolinate + NADPH + H(+). It participates in amino-acid biosynthesis; L-lysine biosynthesis via DAP pathway; (S)-tetrahydrodipicolinate from L-aspartate: step 4/4. Functionally, catalyzes the conversion of 4-hydroxy-tetrahydrodipicolinate (HTPA) to tetrahydrodipicolinate. In Moorella thermoacetica (strain ATCC 39073 / JCM 9320), this protein is 4-hydroxy-tetrahydrodipicolinate reductase.